The primary structure comprises 126 residues: Large ribosomal subunit protein uL22 (126 aa).

Belongs to the universal ribosomal protein uL22 family. In terms of assembly, part of the 50S ribosomal subunit.

Functionally, this protein binds specifically to 23S rRNA; its binding is stimulated by other ribosomal proteins, e.g. L4, L17, and L20. It is important during the early stages of 50S assembly. It makes multiple contacts with different domains of the 23S rRNA in the assembled 50S subunit and ribosome. The globular domain of the protein is located near the polypeptide exit tunnel on the outside of the subunit, while an extended beta-hairpin is found that lines the wall of the exit tunnel in the center of the 70S ribosome. This chain is Large ribosomal subunit protein uL22, found in Bradyrhizobium sp. (strain BTAi1 / ATCC BAA-1182).